Here is a 212-residue protein sequence, read N- to C-terminus: Proheparin-binding EGF-like growth factor (212 aa).

The signal sequence occupies residues 1-18 (MDGRVVLIHALLTAVCSA). The Extracellular portion of the chain corresponds to 19–167 (AVGKFGRDGP…PSTYDHTTAL (149 aa)). Positions 82 to 108 (SKPQGPVTPKKKGNGNKRRKGKGLGKK) are disordered. Residues 90–106 (PKKKGNGNKRRKGKGLG) are compositionally biased toward basic residues. The EGF-like domain maps to 108-148 (KRDPCLRKYKDFCIHGECKYIRELGAPSCICQPGYHGERCH). Cystine bridges form between Cys-112–Cys-125, Cys-120–Cys-136, and Cys-138–Cys-147. Positions 153 to 212 (PVEHPPSTYDHTTALAVVAVVLSSLCLVIITALLMFRCHKRGVYDVENEEKIKLGITVNH) are cleaved as a propeptide — C-terminal. The helical transmembrane segment at 168–188 (AVVAVVLSSLCLVIITALLMF) threads the bilayer. The Cytoplasmic segment spans residues 189–212 (RCHKRGVYDVENEEKIKLGITVNH).

As to quaternary structure, interacts with CNIH2.

It is found in the secreted. It localises to the extracellular space. The protein localises to the cell membrane. Functionally, may be involved in macrophage-mediated cellular proliferation. It is mitogenic for fibroblasts and smooth muscle but not endothelial cells. It is able to bind EGF receptor/EGFR with higher affinity than EGF itself and is a far more potent mitogen for smooth muscle cells than EGF. Plays an important role in the proper development of cranial nerves by inhibiting the migration of the cranial neural crest cells (NCCs) into the odd-numbered neuromeres (r3 and r5) of the hindbrain Plays a role in mediating v-Jun-induced oncogenic transformation. The chain is Proheparin-binding EGF-like growth factor (HBEGF) from Gallus gallus (Chicken).